We begin with the raw amino-acid sequence, 159 residues long: Ribosomal RNA large subunit methyltransferase H (159 aa).

Residues L76, G107, and I126–L131 each bind S-adenosyl-L-methionine.

Belongs to the RNA methyltransferase RlmH family. As to quaternary structure, homodimer.

It is found in the cytoplasm. The enzyme catalyses pseudouridine(1915) in 23S rRNA + S-adenosyl-L-methionine = N(3)-methylpseudouridine(1915) in 23S rRNA + S-adenosyl-L-homocysteine + H(+). Its function is as follows. Specifically methylates the pseudouridine at position 1915 (m3Psi1915) in 23S rRNA. In Cupriavidus metallidurans (strain ATCC 43123 / DSM 2839 / NBRC 102507 / CH34) (Ralstonia metallidurans), this protein is Ribosomal RNA large subunit methyltransferase H.